A 688-amino-acid chain; its full sequence is MFSNGLSKLIKSKIASTSIITTKNNYSISKLSFSSTSILLNKKYKLSEPFNYEQDCEYALKEPIQFWDEVASKYVHWNKRYEKVYSGDEYNPEWFKGGVLNACYNALDVHAKDPITKNRIAIIHETPSKNNTNKLTYGELWDEVCIFARGLHNLGVEKGDRVVIYMPMINQALIAMLACARLGATHSVVFGGFASPQLAQRIEHFKPKVVISANFGVEGHKINCYTPLLSKALELSSHKPNHTIVYNRLDVKLDAGEVLPPRVEGSLDWSELIKNIAPYRDYALVDSTHPLYILYTSGTTGMPKGVVRDTGGYSVALNYSIRNCYGMKSGDTFFAGSDVGWVVGHTLSVYGPLMVGLTSIIFEGKPTVPDASTYWKLIEKHRVNALFSAPTAIRAIHRDDADGKLASKCDLSSLRSIWLGGERLDSSTFNFLRNITNNKPILDNYWNTESGSPLITNPSCQVPIKANATGKPMPGYQFHVLSPTSERLGADKIGEVCIKLPVAPGFTNTLYLNPEGYKNAYLNEYPGYLRTADSGYYDENGYYHIISRVDDIINVSGHRLSTGSIEEILVKHPKIVECAVIGVHDELKGEIPFGLVVLKPQYKDCAEEVENELIKEVRENIGPVATFKKVLSVNRLPKTRSGKILRNILRKMYNKEEYTVPPTIEDMEVLKEIDIEFEKYKLSHPPKK.

It belongs to the ATP-dependent AMP-binding enzyme family.

It is found in the mitochondrion. It carries out the reaction acetate + ATP + CoA = acetyl-CoA + AMP + diphosphate. Its function is as follows. Activates acetate so that it can be used for lipid synthesis or for energy generation. The protein is Acyl-CoA synthetase short-chain family member B, mitochondrial (aslB) of Dictyostelium discoideum (Social amoeba).